The following is a 506-amino-acid chain: RNA-splicing ligase RtcB homolog (506 aa).

Mn(2+)-binding residues include Asp120, Cys123, His228, His260, and His354. 227–231 is a binding site for GMP; it reads NHYAE. GMP contacts are provided by residues 354–355, 403–406, Ser410, 429–432, and Lys505; these read HN, GGTM, and HGAG. The active-site GMP-histidine intermediate is the His429.

It belongs to the RtcB family. In terms of assembly, catalytic component of the tRNA-splicing ligase complex. It depends on Mn(2+) as a cofactor.

The catalysed reaction is a 3'-end 3'-phospho-ribonucleotide-RNA + a 5'-end dephospho-ribonucleoside-RNA + GTP = a ribonucleotidyl-ribonucleotide-RNA + GMP + diphosphate. It carries out the reaction a 3'-end 2',3'-cyclophospho-ribonucleotide-RNA + a 5'-end dephospho-ribonucleoside-RNA + GTP + H2O = a ribonucleotidyl-ribonucleotide-RNA + GMP + diphosphate + H(+). In terms of biological role, catalytic subunit of the tRNA-splicing ligase complex that acts by directly joining spliced tRNA halves to mature-sized tRNAs by incorporating the precursor-derived splice junction phosphate into the mature tRNA as a canonical 3',5'-phosphodiester. May act as an RNA ligase with broad substrate specificity, and may function toward other RNAs. The chain is RNA-splicing ligase RtcB homolog from Drosophila melanogaster (Fruit fly).